Consider the following 247-residue polypeptide: MSDPLILIPARLGATRLPDKPLADICGEPMIVHVWRRAIAAGLGPVVVCTDAPTVVAAVEAVGGLAVLTRPDHPSGSDRLAEALGIIDPEGRHDVVVNLQGDLPTIDPGIVAAAVTPLADRAVDIATLCAVITRDEERTEPSVVKLVGSPITPTRLRALYFTRATAPWGEGPLYHHIGLYAYRRRALERFVSLSPSVLERREKLEQLRALEAGMRIDAVVVDDVPLGVDTPHDLDRARAVMAARRLN.

This sequence belongs to the KdsB family.

It is found in the cytoplasm. The catalysed reaction is 3-deoxy-alpha-D-manno-oct-2-ulosonate + CTP = CMP-3-deoxy-beta-D-manno-octulosonate + diphosphate. The protein operates within nucleotide-sugar biosynthesis; CMP-3-deoxy-D-manno-octulosonate biosynthesis; CMP-3-deoxy-D-manno-octulosonate from 3-deoxy-D-manno-octulosonate and CTP: step 1/1. Its pathway is bacterial outer membrane biogenesis; lipopolysaccharide biosynthesis. Activates KDO (a required 8-carbon sugar) for incorporation into bacterial lipopolysaccharide in Gram-negative bacteria. This chain is 3-deoxy-manno-octulosonate cytidylyltransferase, found in Methylobacterium nodulans (strain LMG 21967 / CNCM I-2342 / ORS 2060).